Here is a 2856-residue protein sequence, read N- to C-terminus: Lipopolysaccharide-responsive and beige-like anchor protein (2856 aa).

Disordered regions lie at residues Met1–Leu35 and Glu939–Tyr1107. Ala2 carries the N-acetylalanine modification. Phosphoserine is present on residues Ser10, Ser979, and Ser1003. The segment covering Glu991–Leu1009 has biased composition (polar residues). Basic and acidic residues predominate over residues Gln1010–Gln1026. Low complexity predominate over residues Ser1073–Pro1082. Phosphoserine is present on residues Ser1097, Ser1132, Ser1136, Ser1219, Ser1221, Ser1228, Ser1244, and Ser1258. Residues Phe1253–Ser1296 are disordered. Positions Ser1274–Gly1283 are enriched in polar residues. One copy of the WD 1 repeat lies at Ser1298 to Asp1340. Phosphoserine is present on residues Ser1487 and Ser1497. Residues Ala1529 to Val1545 form a helical membrane-spanning segment. Disordered regions lie at residues Asp1556–Gly1621 and Ser1750–Cys1778. Positions Leu1563–Ala1573 are enriched in polar residues. Low complexity predominate over residues Ser1586–Ser1601. Residues Ser1608, Ser1770, Ser1773, and Ser2057 each carry the phosphoserine modification. The region spanning Asn2066–Pro2174 is the BEACH-type PH domain. Positions Ala2193 to Arg2482 constitute a BEACH domain. Ser2489 bears the Phosphoserine mark. WD repeat units lie at residues Asp2584–Val2626, Gly2629–Gly2672, Gly2688–Glu2728, Glu2770–Ala2809, and Gly2812–Glu2851.

As to quaternary structure, interacts with TOM1 and TOLLIP. As to expression, isoform 1 is expressed in the brain, is absent from the lung and the bone marrow and is less abundant in the spleen. Isoform 2 is expressed in the spleen, lung, brain and bone marrow. Isoform 3 is expressed in the brain, is absent from the bone marrow and is less abundant in the spleen and lung.

Its subcellular location is the cell membrane. It is found in the endoplasmic reticulum membrane. The protein localises to the golgi apparatus. It localises to the trans-Golgi network membrane. The protein resides in the lysosome membrane. Functionally, involved in coupling signal transduction and vesicle trafficking to enable polarized secretion and/or membrane deposition of immune effector molecules. Involved in phagophore growth during mitophagy by regulating ATG9A trafficking to mitochondria. This chain is Lipopolysaccharide-responsive and beige-like anchor protein (Lrba), found in Mus musculus (Mouse).